A 485-amino-acid chain; its full sequence is Terminase, large subunit (485 aa).

ADP is bound by residues 17–22 (KPHHVQ), 40–45 (QSGKSE), and R79. Residues 22-197 (QLAIHRSTAK…EFFLMGWRGG (176 aa)) form an ATPase activity region. Q97 and Q99 together coordinate ATP. Residues 125–131 (SEFRGKS) carry the Walker A motif motif. The short motif at 145 to 150 (FVILDE) is the Walker B motif element. Catalysis depends on E150, which acts as the For ATPase activity. Positions 256–438 (SNSVFSGLDM…DIVMSLALAY (183 aa)) are nuclease. The Mg(2+) site is built by D294, D347, and D429.

It belongs to the Tequatrovirus large terminase family. In terms of assembly, interacts with the terminase small subunit; the active complex is composed of a pentamer of terminase large subunits and a dodecamer of terminase small subunits. Interacts with the portal protein. It depends on Mg(2+) as a cofactor.

The terminase large subunit acts as an ATP driven molecular motor necessary for viral DNA translocation into empty capsids and as an endonuclease that cuts the viral genome to initiate and to end a packaging reaction The terminase lies at a unique vertex of the procapsid and is composed of two subunits, a small terminase subunit involved in viral DNA recognition (packaging sequence), and a large terminase subunit possessing endonucleolytic and ATPase activities. Both terminase subunits heterooligomerize and are docked on the portal protein to form the packaging machine. The terminase large subunit exhibits endonuclease activity and cleaves the viral genome concatemer. Once the capsid is packaged with the DNA, the terminase complex is substituted by the tail. The chain is Terminase, large subunit from Thermus thermophilus (Thermus thermophilus phage P23-45).